Here is a 201-residue protein sequence, read N- to C-terminus: Lipopolysaccharide core heptose(II)-phosphate phosphatase (201 aa).

The first 35 residues, 1–35 (MLAFTLRFIKNKRYLATLAGALVIIAGLTSQHAWS), serve as a signal peptide directing secretion.

The protein belongs to the phosphoglycerate mutase family. Ais subfamily.

It is found in the periplasm. It functions in the pathway bacterial outer membrane biogenesis; lipopolysaccharide metabolism. Its function is as follows. Catalyzes the dephosphorylation of heptose(II) of the outer membrane lipopolysaccharide core. The protein is Lipopolysaccharide core heptose(II)-phosphate phosphatase of Salmonella newport (strain SL254).